The following is a 528-amino-acid chain: GMP synthase [glutamine-hydrolyzing] (528 aa).

The 192-residue stretch at 13-204 (SILILDFGSQ…VYSISKCKAD (192 aa)) folds into the Glutamine amidotransferase type-1 domain. The active-site Nucleophile is Cys-90. Active-site residues include His-178 and Glu-180. Residues 205–403 (WNTETFLEET…LGLPDEIIKR (199 aa)) form the GMPS ATP-PPase domain. 232–238 (SGGVDSS) contacts ATP.

Homodimer.

The enzyme catalyses XMP + L-glutamine + ATP + H2O = GMP + L-glutamate + AMP + diphosphate + 2 H(+). Its pathway is purine metabolism; GMP biosynthesis; GMP from XMP (L-Gln route): step 1/1. Its function is as follows. Catalyzes the synthesis of GMP from XMP. The chain is GMP synthase [glutamine-hydrolyzing] from Prochlorococcus marinus (strain MIT 9515).